Here is a 489-residue protein sequence, read N- to C-terminus: Valine--tRNA ligase (489 aa).

The 'KMSKS' region signature appears at 482-486; it reads KMSKS. Lys-485 is a binding site for ATP.

The protein belongs to the class-I aminoacyl-tRNA synthetase family.

It catalyses the reaction tRNA(Val) + L-valine + ATP = L-valyl-tRNA(Val) + AMP + diphosphate. The sequence is that of Valine--tRNA ligase (VALS) from Trichomonas vaginalis.